The primary structure comprises 149 residues: Transcriptional repressor NrdR (149 aa).

A zinc finger lies at C3–C34. The region spanning P49–E139 is the ATP-cone domain.

Belongs to the NrdR family. Zn(2+) is required as a cofactor.

In terms of biological role, negatively regulates transcription of bacterial ribonucleotide reductase nrd genes and operons by binding to NrdR-boxes. The polypeptide is Transcriptional repressor NrdR (Acidovorax sp. (strain JS42)).